Consider the following 149-residue polypeptide: MSIHQVMRYLPHRYPFLLVDRVTDFKPGEYLEAIKNVSINEPYFQGHFPIRPVMPGVLIMEALAQATGLLAFKTEEARNENQDKQQLYLFVGIDEARFRRQVEPGDQLHLRVELLRVVRGIWRFKAEARVNGDLVASATLMCAGKEIES.

Residue His47 is part of the active site.

This sequence belongs to the thioester dehydratase family. FabZ subfamily.

The protein resides in the cytoplasm. It carries out the reaction a (3R)-hydroxyacyl-[ACP] = a (2E)-enoyl-[ACP] + H2O. Its function is as follows. Involved in unsaturated fatty acids biosynthesis. Catalyzes the dehydration of short chain beta-hydroxyacyl-ACPs and long chain saturated and unsaturated beta-hydroxyacyl-ACPs. This is 3-hydroxyacyl-[acyl-carrier-protein] dehydratase FabZ from Thioalkalivibrio sulfidiphilus (strain HL-EbGR7).